Consider the following 1047-residue polypeptide: Helicase-like transcription factor CHR27 (1047 aa).

The span at 1 to 11 (MDSAIEISSGS) shows a compositional bias: low complexity. Disordered regions lie at residues 1–89 (MDSA…SGSG), 103–130 (RTLP…SGSR), and 145–174 (KRTL…GSRF). 2 stretches are compositionally biased toward polar residues: residues 52–88 (TNQA…SSGS) and 118–128 (SGTNNISNASG). Residues 296–597 (ETSSFNCPGG…YSYFRFLRYD (302 aa)) enclose the Helicase ATP-binding domain. Position 309 to 316 (309 to 316 (DDQGLGKT)) interacts with ATP. Disordered regions lie at residues 349-407 (ADDE…TRAF) and 511-533 (VGAS…SEPD). Over residues 354 to 368 (DNAKHESGSHVKPEL) the composition is skewed to basic and acidic residues. Residues 370–379 (VSSNSETSVL) are compositionally biased toward polar residues. The segment covering 385–400 (DENDSSDMEKAEDEEA) has biased composition (acidic residues). Residues 511 to 523 (VGASKKSKRRGRK) show a composition bias toward basic residues. The RING-type; degenerate zinc-finger motif lies at 751–790 (CYECNEPPEKPVVTLCGHIFCYECVLEYITGDENTCPVPR). Positions 851 to 868 (QPDSPNSAQHGQMPSSSR) are enriched in polar residues. Residues 851–873 (QPDSPNSAQHGQMPSSSRPYDDD) form a disordered region. One can recognise a Helicase C-terminal domain in the interval 887–1042 (SPSQGAVKTI…ATRLTVDDLK (156 aa)).

This sequence belongs to the SNF2/RAD54 helicase family. RAD16 subfamily. Interacts with SUVR2. Interacts with itself.

It is found in the nucleus. In terms of biological role, probable helicase-like transcription factor involved in transcriptional gene silencing. Associates with SUVR2 and contributes to transcriptional gene silencing at RNA-directed DNA methylation (RdDM) target loci but also at RdDM-independent target loci. May be involved in nucleosome positioning to form ordered nucleosome arrays on chromatin. Associates with SUVR2 and functions redundantly with FRG2. Required for the efficient methylation of a broad range of RdDM target loci. The polypeptide is Helicase-like transcription factor CHR27 (Arabidopsis thaliana (Mouse-ear cress)).